Here is a 344-residue protein sequence, read N- to C-terminus: GDSL esterase/lipase At5g03590 (344 aa).

An N-terminal signal peptide occupies residues 1-19 (MHYLMKLFFSLSLFFGING). The Nucleophile role is filled by S41. Residues N126, N227, and N238 are each glycosylated (N-linked (GlcNAc...) asparagine). Residue D318 is part of the active site.

It belongs to the 'GDSL' lipolytic enzyme family.

It localises to the secreted. The sequence is that of GDSL esterase/lipase At5g03590 from Arabidopsis thaliana (Mouse-ear cress).